Here is a 718-residue protein sequence, read N- to C-terminus: Protein Hook homolog 1 (718 aa).

Positions 8–124 (PLLCDSLILW…RLMQLILGCA (117 aa)) constitute a Calponin-homology (CH) domain. 2 coiled-coil regions span residues 164–428 (SASD…ELRY) and 473–652 (LLLQ…AKLR).

It belongs to the hook family. As to quaternary structure, interacts with microtubules.

The protein localises to the cytoplasm. Its subcellular location is the cytoskeleton. In terms of biological role, may function to promote vesicle trafficking and/or fusion. This chain is Protein Hook homolog 1 (HOOK1), found in Gallus gallus (Chicken).